A 345-amino-acid chain; its full sequence is tRNA dimethylallyltransferase (345 aa).

Residue 9 to 16 participates in ATP binding; the sequence is GPTASGKS. Residue 11–16 coordinates substrate; that stretch reads TASGKS. 2 interaction with substrate tRNA regions span residues 34–37 and 195–199; these read DSMQ and QRMIR.

The protein belongs to the IPP transferase family. As to quaternary structure, monomer. Mg(2+) is required as a cofactor.

The enzyme catalyses adenosine(37) in tRNA + dimethylallyl diphosphate = N(6)-dimethylallyladenosine(37) in tRNA + diphosphate. Catalyzes the transfer of a dimethylallyl group onto the adenine at position 37 in tRNAs that read codons beginning with uridine, leading to the formation of N6-(dimethylallyl)adenosine (i(6)A). This Orientia tsutsugamushi (strain Ikeda) (Rickettsia tsutsugamushi) protein is tRNA dimethylallyltransferase.